The chain runs to 378 residues: MRLASQSAILVKVWTWNASRNAWKASGGIFDIPQKETRLKELERRLEDPSLWNDPEAARKVSQEAARLRRTVDTFRSLESDLQGLLELMEELPAEEREALKPELEEAAKKLDELYHQTLLNFPHAEKNAILTIQPGAGGTEACDWAEMLLRMYTRFAERQGFQVEVVDLTPGPEAGIDYAQILVKGENAYGLLSPEAGVHRLVRPSPFDASGRRHTSFAGVEVIPEVDEEVEVVLKPEELRIDVMRASGPGGQGVNTTDSAVRVVHLPTGITVTCQTTRSQIKNKELALKILKARLYELERKKREEELKALRGEVRPIEWGSQIRSYVLDKNYVKDHRTGLMRHDPENVLDGDLMDLIWAGLEWKAGRRQGTEEVEAE.

Position 253 is an N5-methylglutamine (glutamine 253).

It belongs to the prokaryotic/mitochondrial release factor family. As to quaternary structure, interacts with the ribosome. Interacts with ribosomal protein L11. Recruited to stalled E.coli ribosomes by E.coli ArfA.

The protein localises to the cytoplasm. Its function is as follows. Peptide chain release factor 2 directs the termination of translation in response to the peptide chain termination codons UGA and UAA. In endogenous ribosomes interacts with P-site tRNA and 23S rRNA. In the presence of truncated mRNA in the 70S ribosome, ArfA and RF2 interact such that the GGQ peptide hydrolysis motif of RF2 rises into the peptidyl-transferase center and releases the ribosome. Recruited to stalled E.coli 70S ribosomes by E.coli ArfA, but cannot be functionally accomodated in the peptidyl-transferase center. Note T.thermophilus probably does not encode arfA. This is Peptide chain release factor RF2 (prfB) from Thermus thermophilus (strain ATCC 27634 / DSM 579 / HB8).